The sequence spans 365 residues: Peridinin-chlorophyll a-binding protein, chloroplastic (365 aa).

The N-terminal 52 residues, 1–52 (MVRGARKAIAVGVAVAVACGLQKHLNFVPGPRHAAPVAAAAASMMMAPAAFA), are a transit peptide targeting the chloroplast. 2 repeat units span residues 53–215 (DEIG…VPSG) and 216–365 (DKIG…ASQR).

Monomer.

It localises to the plastid. The protein resides in the chloroplast. Its function is as follows. Water-soluble antenna for capture of solar energy in the blue-green range. Peridinin is an asymmetric carotenoid. This is Peridinin-chlorophyll a-binding protein, chloroplastic from Symbiodinium sp. (Dinoflagellate).